The primary structure comprises 199 residues: Alpha-D-glucose 1-phosphate phosphatase YihX (199 aa).

The active-site Nucleophile is the D6. D6 serves as a coordination point for Mg(2+). Substrate is bound by residues 6–8, 107–108, K141, and D166; these read DLG and SN. D166 serves as a coordination point for Mg(2+).

It belongs to the HAD-like hydrolase superfamily. YihX family. Mg(2+) is required as a cofactor. The cofactor is Mn(2+). It depends on Co(2+) as a cofactor. Zn(2+) serves as cofactor.

It carries out the reaction alpha-D-glucose 1-phosphate + H2O = D-glucose + phosphate. Catalyzes the dephosphorylation of alpha-D-glucose 1-phosphate (Glc1P) and, to a lesser extent, of other sugar phosphates. Has no activity with the beta form of Glc1P. In addition, YihX has significant phosphatase activity against pyridoxal phosphate (PLP) and low beta-phosphoglucomutase activity. This chain is Alpha-D-glucose 1-phosphate phosphatase YihX (yihX), found in Escherichia coli (strain K12).